The sequence spans 243 residues: Probable 2-phosphosulfolactate phosphatase (243 aa).

The protein belongs to the ComB family. The cofactor is Mg(2+).

It catalyses the reaction (2R)-O-phospho-3-sulfolactate + H2O = (2R)-3-sulfolactate + phosphate. The polypeptide is Probable 2-phosphosulfolactate phosphatase (Prochlorococcus marinus (strain SARG / CCMP1375 / SS120)).